A 1011-amino-acid chain; its full sequence is Protein translocase subunit SecA, chloroplastic (1011 aa).

Residues 1 to 17 (MATSSLCSSFTSQTCNP) are compositionally biased toward polar residues. Residues 1–22 (MATSSLCSSFTSQTCNPHSRPH) are disordered. The transit peptide at 1 to 59 (MATSSLCSSFTSQTCNPHSRPHRKTLTLPGSVFLCRQFHLNSPSVSKTRRIRTRQSGPV) directs the protein to the chloroplast. Residue 164-171 (MRTGEGKT) participates in ATP binding. A disordered region spans residues 976-1011 (QDKMENQKSGKRNARPPTDTNPDPVGTVEPSTSASS).

It belongs to the SecA family.

The protein resides in the plastid. Its subcellular location is the chloroplast stroma. The protein localises to the chloroplast thylakoid membrane. It carries out the reaction ATP + H2O + chloroplast-proteinSide 1 = ADP + phosphate + chloroplast-proteinSide 2.. Has a central role in coupling the hydrolysis of ATP to the transfer of proteins across the thylakoid membrane. Facilitates the transport of precursor proteins from the chloroplast stroma to thylakoid lumen. This is Protein translocase subunit SecA, chloroplastic from Pisum sativum (Garden pea).